The primary structure comprises 96 residues: Myosuppressin (96 aa).

The first 24 residues, 1–24 (MALGNGYYCAVVCVVLACASVVLC), serve as a signal peptide directing secretion. The propeptide occupies 25–80 (APAQLCAGAADDDPRAARFCQALNTFLELYAEAAGEQVPEYQALVRDYPQLLDTGM). Gln-83 is modified (pyrrolidone carboxylic acid; partial). Phenylalanine amide is present on Phe-92. Residue Arg-96 is a propeptide.

It belongs to the myosuppressin family. In terms of tissue distribution, expressed in corpora cardiaca (CC), corpora allata (CA), antennal lobe (AL) and gnathal ganglion (GNG) (at protein level). In its non-pyroglutamate form, expression in GNG detected in all animals, in AL, CC and in CA in most animals (at protein level). In its pyroglutamate form, expression in CC, CA and GNG detected in all animals, in AL in some animals (at protein level).

It is found in the secreted. Myoinhibiting neuropeptide. The protein is Myosuppressin of Agrotis ipsilon (Black cutworm moth).